The following is a 186-amino-acid chain: Signal peptidase complex catalytic subunit SEC11 (186 aa).

Residues 1–20 lie on the Cytoplasmic side of the membrane; that stretch reads MDALGLSKLRHLKPRQLLSQ. Residues 21-41 traverse the membrane as a helical; Signal-anchor for type II membrane protein segment; the sequence is VLNFALILSTAFMLWKGLSVA. Topologically, residues 42–186 are lumenal; that stretch reads TDSPSPIVVV…MGLLVIVQRE (145 aa). Catalysis depends on charge relay system residues Ser55, His102, and Asp128. The C-terminal short (CTS) helix stretch occupies residues 172–183; that stretch reads ALLGIMGLLVIV.

It belongs to the peptidase S26B family. As to quaternary structure, component of the signal peptidase complex (SPC) composed of a catalytic subunit SEC11 and three accessory subunits SPC1, SPC2 and SPC3. The complex induces a local thinning of the ER membrane which is used to measure the length of the signal peptide (SP) h-region of protein substrates. This ensures the selectivity of the complex towards h-regions shorter than 18-20 amino acids. SPC associates with the translocon complex.

The protein localises to the endoplasmic reticulum membrane. It carries out the reaction Cleavage of hydrophobic, N-terminal signal or leader sequences from secreted and periplasmic proteins.. Functionally, catalytic component of the signal peptidase complex (SPC) which catalyzes the cleavage of N-terminal signal sequences from nascent proteins as they are translocated into the lumen of the endoplasmic reticulum. Specifically cleaves N-terminal signal peptides that contain a hydrophobic alpha-helix (h-region) shorter than 18-20 amino acids. The sequence is that of Signal peptidase complex catalytic subunit SEC11 (SEC11) from Tuber melanosporum (strain Mel28) (Perigord black truffle).